Consider the following 478-residue polypeptide: Cytochrome c-552 (478 aa).

An N-terminal signal peptide occupies residues 1–26 (MTRIKINARRIFSLLIPFFFFTSVHA). Residue His94 coordinates heme c. Heme is bound by residues Cys122, Cys125, and Lys126. Heme c is bound by residues Cys160, Cys163, His164, Cys209, Cys212, and His213. Glu215, Tyr216, Lys261, and Gln263 together coordinate Ca(2+). Tyr216 contacts substrate. Position 264 (His264) interacts with substrate. Residues His275, Cys282, Cys285, His286, His301, Cys314, Cys317, His318, and His393 each coordinate heme c.

This sequence belongs to the cytochrome c-552 family. It depends on Ca(2+) as a cofactor. Requires heme c as cofactor.

It localises to the periplasm. It catalyses the reaction 6 Fe(III)-[cytochrome c] + NH4(+) + 2 H2O = 6 Fe(II)-[cytochrome c] + nitrite + 8 H(+). It participates in nitrogen metabolism; nitrate reduction (assimilation). Functionally, catalyzes the reduction of nitrite to ammonia, consuming six electrons in the process. The sequence is that of Cytochrome c-552 from Escherichia coli O6:H1 (strain CFT073 / ATCC 700928 / UPEC).